Reading from the N-terminus, the 310-residue chain is ADP-L-glycero-D-manno-heptose-6-epimerase (310 aa).

NADP(+) contacts are provided by residues phenylalanine 10–isoleucine 11, aspartate 31–asparagine 32, lysine 38, lysine 53, glutamate 75–serine 79, and asparagine 92. The Proton acceptor role is filled by tyrosine 140. Lysine 144 provides a ligand contact to NADP(+). Asparagine 169 contributes to the substrate binding site. Residues valine 170 and lysine 178 each coordinate NADP(+). The active-site Proton acceptor is the lysine 178. Substrate-binding positions include serine 180, histidine 187, phenylalanine 201 to serine 204, arginine 209, and tyrosine 272.

The protein belongs to the NAD(P)-dependent epimerase/dehydratase family. HldD subfamily. As to quaternary structure, homopentamer. It depends on NADP(+) as a cofactor.

It carries out the reaction ADP-D-glycero-beta-D-manno-heptose = ADP-L-glycero-beta-D-manno-heptose. It participates in nucleotide-sugar biosynthesis; ADP-L-glycero-beta-D-manno-heptose biosynthesis; ADP-L-glycero-beta-D-manno-heptose from D-glycero-beta-D-manno-heptose 7-phosphate: step 4/4. Catalyzes the interconversion between ADP-D-glycero-beta-D-manno-heptose and ADP-L-glycero-beta-D-manno-heptose via an epimerization at carbon 6 of the heptose. This is ADP-L-glycero-D-manno-heptose-6-epimerase from Klebsiella pneumoniae (strain 342).